Here is a 295-residue protein sequence, read N- to C-terminus: Glutamyl-Q tRNA(Asp) synthetase (295 aa).

L-glutamate is bound by residues 5 to 9 (RFAPS) and Glu41. Positions 8–18 (PSPTGLLHIGS) match the 'HIGH' region motif. 4 residues coordinate Zn(2+): Cys97, Cys99, Tyr117, and Cys121. L-glutamate is bound by residues Tyr178 and Arg196. Positions 234 to 238 (KWSKQ) match the 'KMSKS' region motif. Residue Lys237 coordinates ATP.

The protein belongs to the class-I aminoacyl-tRNA synthetase family. GluQ subfamily. It depends on Zn(2+) as a cofactor.

Catalyzes the tRNA-independent activation of glutamate in presence of ATP and the subsequent transfer of glutamate onto a tRNA(Asp). Glutamate is transferred on the 2-amino-5-(4,5-dihydroxy-2-cyclopenten-1-yl) moiety of the queuosine in the wobble position of the QUC anticodon. The polypeptide is Glutamyl-Q tRNA(Asp) synthetase (Neisseria gonorrhoeae (strain ATCC 700825 / FA 1090)).